A 208-amino-acid polypeptide reads, in one-letter code: Small ribosomal subunit protein uS4 (208 aa).

Residues 98-161 (RRLDNVIYRL…RKIPVLAEAQ (64 aa)) form the S4 RNA-binding domain.

The protein belongs to the universal ribosomal protein uS4 family. Part of the 30S ribosomal subunit. Contacts protein S5. The interaction surface between S4 and S5 is involved in control of translational fidelity.

In terms of biological role, one of the primary rRNA binding proteins, it binds directly to 16S rRNA where it nucleates assembly of the body of the 30S subunit. Its function is as follows. With S5 and S12 plays an important role in translational accuracy. The protein is Small ribosomal subunit protein uS4 of Nitratidesulfovibrio vulgaris (strain ATCC 29579 / DSM 644 / CCUG 34227 / NCIMB 8303 / VKM B-1760 / Hildenborough) (Desulfovibrio vulgaris).